Reading from the N-terminus, the 344-residue chain is Follistatin (344 aa).

An N-terminal signal peptide occupies residues 1–29 (MARPRHQPGGLCLLLLLLCQFMEDRSAQA). In terms of domain architecture, TB spans 30–103 (GNCWLRQAKN…TCENVDCGPG (74 aa)). 18 disulfide bridges follow: C32-C55, C42-C88, C56-C91, C95-C106, C100-C116, C118-C150, C122-C143, C132-C164, C168-C179, C173-C189, C192-C225, C196-C218, C207-C239, C245-C256, C250-C267, C270-C302, C274-C295, and C284-C316. Residues 94-117 (TCENVDCGPGKKCRMNKKNKPRCV) form the Follistatin-like 1 domain. Residues 112 to 166 (NKPRCVCAPDCSNITWKGLVCGLDGKTYRNECALLKARCKEQPELQVQYQGKCKK) form the Kazal-like 1 domain. An N-linked (GlcNAc...) asparagine glycan is attached at N124. The 24-residue stretch at 167–190 (TCRDVFCPGSSTCVVDQTNNAYCV) folds into the Follistatin-like 2 domain. The 56-residue stretch at 186–241 (NAYCVTCNRICPEPTSSEQYLCGNDGVTYPSACHLRKATCLLGRSIGLAYEGKCIK) folds into the Kazal-like 2 domain. A Follistatin-like 3 domain is found at 244 to 268 (SCDDIQCTGGKKCLWDFKVGRGRCS). The region spanning 261-318 (KVGRGRCSLCGELCPESKSEEPVCASDNATYASECAMKEAACSSGVLLEVKHSGSCNS) is the Kazal-like 3 domain. The N-linked (GlcNAc...) asparagine glycan is linked to N288. The tract at residues 316-344 (CNSISEDTEDEEEDEDQDYSFPISSILEW) is disordered. Residues 321 to 333 (EDTEDEEEDEDQD) are compositionally biased toward acidic residues.

Monomer.

The protein localises to the secreted. Functionally, binds directly to activin and functions as an activin antagonist. Specific inhibitor of the biosynthesis and secretion of pituitary follicle stimulating hormone (FSH). This chain is Follistatin, found in Bubalus bubalis (Domestic water buffalo).